The primary structure comprises 439 residues: Glycosyl hydrolase DigH (439 aa).

An N-terminal signal peptide occupies residues 1–27; sequence MDICSRNKKLTIRRPAILVALALLLCS. The N-palmitoyl cysteine moiety is linked to residue Cys28. Cys28 carries the S-diacylglycerol cysteine lipid modification. Residues 34–54 are disordered; that stretch reads ESMVTPPAGSKPPATTQQSSQ.

It belongs to the glycosyl hydrolase-like 10 (GHL10) family.

The protein localises to the cell outer membrane. In terms of biological role, divisome-localized glycosyl hydrolase that cleaves peptide-free (denuded) peptidoglycans. The sequence is that of Glycosyl hydrolase DigH from Escherichia coli O157:H7.